Consider the following 165-residue polypeptide: Chorismate pyruvate-lyase (165 aa).

Residues Met35, Arg77, Leu115, and Glu156 each contribute to the substrate site.

The protein belongs to the UbiC family. Monomer.

The protein resides in the cytoplasm. It carries out the reaction chorismate = 4-hydroxybenzoate + pyruvate. It participates in cofactor biosynthesis; ubiquinone biosynthesis. Its function is as follows. Removes the pyruvyl group from chorismate, with concomitant aromatization of the ring, to provide 4-hydroxybenzoate (4HB) for the ubiquinone pathway. The chain is Chorismate pyruvate-lyase from Escherichia coli O7:K1 (strain IAI39 / ExPEC).